We begin with the raw amino-acid sequence, 364 residues long: 4-hydroxythreonine-4-phosphate dehydrogenase (364 aa).

2 residues coordinate substrate: histidine 148 and threonine 149. 3 residues coordinate a divalent metal cation: histidine 177, histidine 216, and histidine 301. The substrate site is built by lysine 309, asparagine 318, and arginine 327.

Belongs to the PdxA family. As to quaternary structure, homodimer. Zn(2+) serves as cofactor. Requires Mg(2+) as cofactor. The cofactor is Co(2+).

It localises to the cytoplasm. It carries out the reaction 4-(phosphooxy)-L-threonine + NAD(+) = 3-amino-2-oxopropyl phosphate + CO2 + NADH. It participates in cofactor biosynthesis; pyridoxine 5'-phosphate biosynthesis; pyridoxine 5'-phosphate from D-erythrose 4-phosphate: step 4/5. Functionally, catalyzes the NAD(P)-dependent oxidation of 4-(phosphooxy)-L-threonine (HTP) into 2-amino-3-oxo-4-(phosphooxy)butyric acid which spontaneously decarboxylates to form 3-amino-2-oxopropyl phosphate (AHAP). The chain is 4-hydroxythreonine-4-phosphate dehydrogenase from Campylobacter jejuni (strain RM1221).